Reading from the N-terminus, the 139-residue chain is Sec-independent protein translocase protein TatB (139 aa).

A helical transmembrane segment spans residues 1 to 21 (MFDIGFTELLLVGLVALMVLG). Residues 69 to 139 (LDLEREMKQS…PLRSDRPSEP (71 aa)) form a disordered region. Residues 80 to 95 (MPPPASNPAATPPSPP) are compositionally biased toward pro residues.

Belongs to the TatB family. As to quaternary structure, the Tat system comprises two distinct complexes: a TatABC complex, containing multiple copies of TatA, TatB and TatC subunits, and a separate TatA complex, containing only TatA subunits. Substrates initially bind to the TatABC complex, which probably triggers association of the separate TatA complex to form the active translocon.

Its subcellular location is the cell inner membrane. Its function is as follows. Part of the twin-arginine translocation (Tat) system that transports large folded proteins containing a characteristic twin-arginine motif in their signal peptide across membranes. Together with TatC, TatB is part of a receptor directly interacting with Tat signal peptides. TatB may form an oligomeric binding site that transiently accommodates folded Tat precursor proteins before their translocation. The chain is Sec-independent protein translocase protein TatB from Stutzerimonas stutzeri (strain A1501) (Pseudomonas stutzeri).